The following is a 313-amino-acid chain: tRNA pseudouridine synthase B (313 aa).

Aspartate 46 acts as the Nucleophile in catalysis.

The protein belongs to the pseudouridine synthase TruB family. Type 1 subfamily.

The enzyme catalyses uridine(55) in tRNA = pseudouridine(55) in tRNA. Responsible for synthesis of pseudouridine from uracil-55 in the psi GC loop of transfer RNAs. The sequence is that of tRNA pseudouridine synthase B from Nitrosospira multiformis (strain ATCC 25196 / NCIMB 11849 / C 71).